Consider the following 174-residue polypeptide: Bifunctional protein PyrR 2 (174 aa).

Residues T39–R40, D100–T108, and R133 contribute to the substrate site. The PRPP-binding motif lies at V96–T108.

Belongs to the purine/pyrimidine phosphoribosyltransferase family. PyrR subfamily. Homodimer and homohexamer; in equilibrium.

It carries out the reaction UMP + diphosphate = 5-phospho-alpha-D-ribose 1-diphosphate + uracil. Its function is as follows. Regulates transcriptional attenuation of the pyrimidine nucleotide (pyr) operon by binding in a uridine-dependent manner to specific sites on pyr mRNA. This disrupts an antiterminator hairpin in the RNA and favors formation of a downstream transcription terminator, leading to a reduced expression of downstream genes. Also displays a weak uracil phosphoribosyltransferase activity which is not physiologically significant. The protein is Bifunctional protein PyrR 2 (pyrR2) of Lactiplantibacillus plantarum (strain ATCC BAA-793 / NCIMB 8826 / WCFS1) (Lactobacillus plantarum).